The chain runs to 363 residues: Phosphoserine aminotransferase (363 aa).

Residue Arg-42 participates in L-glutamate binding. Residues 76 to 77 (GR), Trp-102, Thr-156, Asp-175, and Gln-198 each bind pyridoxal 5'-phosphate. Position 199 is an N6-(pyridoxal phosphate)lysine (Lys-199). Pyridoxal 5'-phosphate is bound at residue 240–241 (NT).

The protein belongs to the class-V pyridoxal-phosphate-dependent aminotransferase family. SerC subfamily. As to quaternary structure, homodimer. Pyridoxal 5'-phosphate is required as a cofactor.

It localises to the cytoplasm. It catalyses the reaction O-phospho-L-serine + 2-oxoglutarate = 3-phosphooxypyruvate + L-glutamate. The catalysed reaction is 4-(phosphooxy)-L-threonine + 2-oxoglutarate = (R)-3-hydroxy-2-oxo-4-phosphooxybutanoate + L-glutamate. Its pathway is amino-acid biosynthesis; L-serine biosynthesis; L-serine from 3-phospho-D-glycerate: step 2/3. It functions in the pathway cofactor biosynthesis; pyridoxine 5'-phosphate biosynthesis; pyridoxine 5'-phosphate from D-erythrose 4-phosphate: step 3/5. In terms of biological role, catalyzes the reversible conversion of 3-phosphohydroxypyruvate to phosphoserine and of 3-hydroxy-2-oxo-4-phosphonooxybutanoate to phosphohydroxythreonine. This Shewanella baltica (strain OS195) protein is Phosphoserine aminotransferase.